A 182-amino-acid chain; its full sequence is uncharacterized protein (182 aa).

Transmembrane regions (helical) follow at residues 19-39 (LFGIIPIKFIVSFLQLVSIVS), 51-71 (IYLVLLSVGIVLNVFTVVVFI), 87-107 (IFTVVPFIYAVYTFISFIELF), and 118-138 (CSPFAYAFIFLCIYIFYLAMC).

Its subcellular location is the membrane. This is an uncharacterized protein from Caenorhabditis elegans.